We begin with the raw amino-acid sequence, 535 residues long: Bifunctional purine biosynthesis protein PurH (535 aa).

The region spanning 1 to 148 is the MGS-like domain; it reads MNNARPIRRA…KNHKDTTIIV (148 aa).

The protein belongs to the PurH family.

The enzyme catalyses (6R)-10-formyltetrahydrofolate + 5-amino-1-(5-phospho-beta-D-ribosyl)imidazole-4-carboxamide = 5-formamido-1-(5-phospho-D-ribosyl)imidazole-4-carboxamide + (6S)-5,6,7,8-tetrahydrofolate. The catalysed reaction is IMP + H2O = 5-formamido-1-(5-phospho-D-ribosyl)imidazole-4-carboxamide. It functions in the pathway purine metabolism; IMP biosynthesis via de novo pathway; 5-formamido-1-(5-phospho-D-ribosyl)imidazole-4-carboxamide from 5-amino-1-(5-phospho-D-ribosyl)imidazole-4-carboxamide (10-formyl THF route): step 1/1. The protein operates within purine metabolism; IMP biosynthesis via de novo pathway; IMP from 5-formamido-1-(5-phospho-D-ribosyl)imidazole-4-carboxamide: step 1/1. The polypeptide is Bifunctional purine biosynthesis protein PurH (Shewanella woodyi (strain ATCC 51908 / MS32)).